Here is a 382-residue protein sequence, read N- to C-terminus: Serine/arginine-rich splicing factor SR45a (382 aa).

Low complexity-rich tracts occupy residues 30 to 45, 54 to 68, 177 to 195, and 202 to 219; these read PMSYSRRSRYSPSLSP, VSRSLSRSPTRSVSS, PSYSPRRSVSCSRSRSRSY, and SYSPSYGRRGRSSSYSPF. 2 disordered regions span residues 30-76 and 150-382; these read PMSY…PGNS and KARR…SVSP. Over residues 288-316 the composition is skewed to basic and acidic residues; that stretch reads RARDRSCSPYYRGRDRSYSPHYQGRDRSY. The segment covering 329–343 has biased composition (low complexity); that stretch reads VSGSVSPGGRSMSRS. Over residues 345 to 361 the composition is skewed to basic residues; the sequence is SPRKGRKESRSKSRRHD. A compositionally biased stretch (low complexity) spans 364–382; the sequence is SSMCHSRSARSSTSRSVSP.

It belongs to the splicing factor SR family. SR45 subfamily. In terms of assembly, component of the spliceosome. Homodimer. Interacts with PRP38, SCL28, SR45, RNU1 and U2AF35B. In terms of processing, phosphorylated. In terms of tissue distribution, expressed in leaves, stems and roots.

It is found in the nucleus speckle. Probable splicing factor involved in constitutive and/or alternative splicing events. May bridge the 5' and 3' components of the spliceosome. The polypeptide is Serine/arginine-rich splicing factor SR45a (SR45A) (Arabidopsis thaliana (Mouse-ear cress)).